The chain runs to 426 residues: Gamma-glutamyl phosphate reductase (426 aa).

The protein belongs to the gamma-glutamyl phosphate reductase family.

Its subcellular location is the cytoplasm. It catalyses the reaction L-glutamate 5-semialdehyde + phosphate + NADP(+) = L-glutamyl 5-phosphate + NADPH + H(+). The protein operates within amino-acid biosynthesis; L-proline biosynthesis; L-glutamate 5-semialdehyde from L-glutamate: step 2/2. Catalyzes the NADPH-dependent reduction of L-glutamate 5-phosphate into L-glutamate 5-semialdehyde and phosphate. The product spontaneously undergoes cyclization to form 1-pyrroline-5-carboxylate. This is Gamma-glutamyl phosphate reductase from Cupriavidus taiwanensis (strain DSM 17343 / BCRC 17206 / CCUG 44338 / CIP 107171 / LMG 19424 / R1) (Ralstonia taiwanensis (strain LMG 19424)).